The following is a 130-amino-acid chain: Small ribosomal subunit protein uS11 (130 aa).

This sequence belongs to the universal ribosomal protein uS11 family. As to quaternary structure, part of the 30S ribosomal subunit. Interacts with proteins S7 and S18. Binds to IF-3.

Functionally, located on the platform of the 30S subunit, it bridges several disparate RNA helices of the 16S rRNA. Forms part of the Shine-Dalgarno cleft in the 70S ribosome. The sequence is that of Small ribosomal subunit protein uS11 from Caldanaerobacter subterraneus subsp. tengcongensis (strain DSM 15242 / JCM 11007 / NBRC 100824 / MB4) (Thermoanaerobacter tengcongensis).